Reading from the N-terminus, the 1136-residue chain is Nitric oxide synthase, inducible (1136 aa).

Residues Cys107 and Cys112 each coordinate Zn(2+). Cys197 is a heme b binding site. L-arginine contacts are provided by Gln260, Trp369, Tyr370, and Glu374. (6R)-L-erythro-5,6,7,8-tetrahydrobiopterin-binding residues include Arg378, Val459, Trp460, and Phe473. Heme b is bound at residue Tyr488. Residues 512–532 (LSILAKAVLLASLLLQKTMAA) form a calmodulin-binding region. The Flavodoxin-like domain occupies 536-674 (VTVIYATETG…AFRTWAVTAF (139 aa)). Positions 542, 543, 544, 546, 547, 588, 589, 625, 632, 658, and 662 each coordinate FMN. In terms of domain architecture, FAD-binding FR-type spans 727 to 967 (KNVIPMKLKF…VRSADGFRLP (241 aa)). Arg747 lines the NADP(+) pocket. FAD-binding residues include His769, Arg903, Tyr905, Ser906, Thr921, Ala923, Tyr927, Val940, Cys941, and Ser942. NADP(+) contacts are provided by Thr981, Arg1014, Ser1043, Arg1044, Lys1050, Tyr1052, Gln1054, and Asp1087.

This sequence belongs to the NOS family. In terms of assembly, homodimer. The cofactor is heme b. FAD is required as a cofactor. FMN serves as cofactor. Requires (6R)-L-erythro-5,6,7,8-tetrahydrobiopterin as cofactor.

Its subcellular location is the cytoplasm. The protein localises to the cytosol. It catalyses the reaction 2 L-arginine + 3 NADPH + 4 O2 + H(+) = 2 L-citrulline + 2 nitric oxide + 3 NADP(+) + 4 H2O. Not stimulated by calcium/calmodulin. Functionally, produces nitric oxide (NO) which is a messenger molecule with diverse functions throughout the body. NO may serve as both a paracrine and autocrine signal for modulating osteoclast bone resorption. Also has nitrosylase activity and mediates cysteine S-nitrosylation of cytoplasmic target proteins such COX2. The sequence is that of Nitric oxide synthase, inducible (NOS2) from Gallus gallus (Chicken).